A 149-amino-acid polypeptide reads, in one-letter code: Secreted RxLR effector protein 3 (149 aa).

The N-terminal stretch at Met-1–Ala-23 is a signal peptide. The short motif at Arg-38 to Arg-53 is the RxLR-dEER element.

The protein belongs to the RxLR effector family.

It localises to the secreted. It is found in the host nucleus. The protein localises to the host cytoplasm. Its function is as follows. Secreted effector that completely suppresses the host cell death induced by cell death-inducing proteins. This is Secreted RxLR effector protein 3 from Plasmopara viticola (Downy mildew of grapevine).